A 104-amino-acid polypeptide reads, in one-letter code: N(4)-acetylcytidine amidohydrolase (104 aa).

The ASCH domain maps to 6-96 (ITFYQRFEAD…TIYPNEHESW (91 aa)). The Proton acceptor role is filled by Lys21. Thr24 serves as the catalytic Nucleophile. The active-site Proton donor is the Glu74.

This sequence belongs to the N(4)-acetylcytidine amidohydrolase family.

The catalysed reaction is N(4)-acetylcytidine + H2O = cytidine + acetate + H(+). It carries out the reaction N(4)-acetyl-2'-deoxycytidine + H2O = 2'-deoxycytidine + acetate + H(+). It catalyses the reaction N(4)-acetylcytosine + H2O = cytosine + acetate + H(+). In terms of biological role, catalyzes the hydrolysis of N(4)-acetylcytidine (ac4C). The sequence is that of N(4)-acetylcytidine amidohydrolase from Haemophilus influenzae (strain 86-028NP).